The chain runs to 245 residues: 7-cyano-7-deazaguanine synthase 2 (245 aa).

12 to 22 (FSGGQDSTTCL) contacts ATP. Positions 200, 215, 218, and 221 each coordinate Zn(2+).

This sequence belongs to the QueC family. Requires Zn(2+) as cofactor.

It carries out the reaction 7-carboxy-7-deazaguanine + NH4(+) + ATP = 7-cyano-7-deazaguanine + ADP + phosphate + H2O + H(+). The protein operates within purine metabolism; 7-cyano-7-deazaguanine biosynthesis. Its function is as follows. Catalyzes the ATP-dependent conversion of 7-carboxy-7-deazaguanine (CDG) to 7-cyano-7-deazaguanine (preQ(0)). This Mesorhizobium japonicum (strain LMG 29417 / CECT 9101 / MAFF 303099) (Mesorhizobium loti (strain MAFF 303099)) protein is 7-cyano-7-deazaguanine synthase 2.